The primary structure comprises 113 residues: Hemerythrin (113 aa).

Residues His25, His54, Glu58, His73, His77, His101, and Asp106 each coordinate Fe cation.

It belongs to the hemerythrin family. As to quaternary structure, homooctamer.

Its function is as follows. Hemerythrin is a respiratory protein in blood cells of certain marine worms. The oxygen-binding site in each chain contains two iron atoms. In Themiste dyscrita (Peanut worm), this protein is Hemerythrin.